A 144-amino-acid chain; its full sequence is Prefoldin subunit alpha (144 aa).

It belongs to the prefoldin alpha subunit family. Heterohexamer of two alpha and four beta subunits.

Its subcellular location is the cytoplasm. Its function is as follows. Molecular chaperone capable of stabilizing a range of proteins. Seems to fulfill an ATP-independent, HSP70-like function in archaeal de novo protein folding. The sequence is that of Prefoldin subunit alpha from Methanococcus maripaludis (strain C7 / ATCC BAA-1331).